A 480-amino-acid chain; its full sequence is Cysteine--tRNA ligase (480 aa).

Zn(2+) is bound at residue cysteine 31. The 'HIGH' region motif lies at proline 33–histidine 43. The Zn(2+) site is built by cysteine 211, histidine 236, and glutamate 240. Residues lysine 269–serine 273 carry the 'KMSKS' region motif. Lysine 272 is an ATP binding site.

It belongs to the class-I aminoacyl-tRNA synthetase family. Requires Zn(2+) as cofactor.

It catalyses the reaction tRNA(Cys) + L-cysteine + ATP = L-cysteinyl-tRNA(Cys) + AMP + diphosphate. The protein is Cysteine--tRNA ligase of Encephalitozoon cuniculi (strain GB-M1) (Microsporidian parasite).